The sequence spans 186 residues: Inner membrane-spanning protein YciB (186 aa).

The next 5 helical transmembrane spans lie at Ile10–Ile30, Val47–Leu67, Trp76–Phe96, Trp121–Phe141, and Phe149–Leu169.

The protein belongs to the YciB family.

The protein resides in the cell inner membrane. Functionally, plays a role in cell envelope biogenesis, maintenance of cell envelope integrity and membrane homeostasis. The chain is Inner membrane-spanning protein YciB from Acidovorax ebreus (strain TPSY) (Diaphorobacter sp. (strain TPSY)).